We begin with the raw amino-acid sequence, 354 residues long: Guanine nucleotide-binding protein alpha-12 subunit (354 aa).

A G-alpha domain is found at 31-354 (QPLKLLLLGS…SLLMNVAEIL (324 aa)). The G1 motif stretch occupies residues 34–47 (KLLLLGSGECGKST). GTP-binding positions include 39–46 (GSGECGKS), 178–184 (LRVRVKT), 203–207 (DVGGQ), 272–275 (NKID), and alanine 329. Mg(2+) contacts are provided by serine 46 and threonine 184. Residues 176-184 (DFLRVRVKT) form a G2 motif region. A G3 motif region spans residues 199–208 (FKLVDVGGQK). Residues 268-275 (VLFFNKID) are G4 motif. Residues 327–332 (TCALDS) form a G5 motif region.

This sequence belongs to the G-alpha family. As to quaternary structure, g proteins are composed of 3 units; alpha, beta and gamma. The alpha chain contains the guanine nucleotide binding site.

Its function is as follows. Guanine nucleotide-binding proteins (G proteins) are involved as modulators or transducers in various transmembrane signaling systems. In Dictyostelium discoideum (Social amoeba), this protein is Guanine nucleotide-binding protein alpha-12 subunit (gpaL).